The chain runs to 65 residues: Myosin-11 (65 aa).

Residues 1–65 (RSGKLDAFLV…NWQWWRLFTK (65 aa)) form the Myosin motor domain.

This sequence belongs to the TRAFAC class myosin-kinesin ATPase superfamily. Myosin family. Muscle myosin is a hexameric protein that consists of 2 heavy chain subunits (MHC), 2 alkali light chain subunits (MLC) and 2 regulatory light chain subunits (MLC-2).

It is found in the melanosome. Its subcellular location is the cytoplasm. The protein resides in the myofibril. Functionally, muscle contraction. This Sus scrofa (Pig) protein is Myosin-11 (MYH11).